The primary structure comprises 261 residues: Putative hydro-lyase Sfum_3393 (261 aa).

Belongs to the D-glutamate cyclase family.

This Syntrophobacter fumaroxidans (strain DSM 10017 / MPOB) protein is Putative hydro-lyase Sfum_3393.